Reading from the N-terminus, the 37-residue chain is Calcitonin gene-related peptide (37 aa).

Cysteine 2 and cysteine 7 are oxidised to a cystine. Phenylalanine 37 is modified (phenylalanine amide).

Belongs to the calcitonin family.

CGRP induces vasodilation. It dilates a variety of vessels including the coronary, cerebral and systemic vasculature. Its abundance in the CNS also points toward a neurotransmitter or neuromodulator role. The protein is Calcitonin gene-related peptide of Pelophylax ridibundus (Marsh frog).